Here is a 357-residue protein sequence, read N- to C-terminus: Alanine racemase (357 aa).

The active-site Proton acceptor; specific for D-alanine is the K33. At K33 the chain carries N6-(pyridoxal phosphate)lysine. Position 129 (R129) interacts with substrate. Y253 serves as the catalytic Proton acceptor; specific for L-alanine. M301 is a substrate binding site.

Belongs to the alanine racemase family. The cofactor is pyridoxal 5'-phosphate.

The enzyme catalyses L-alanine = D-alanine. The protein operates within amino-acid biosynthesis; D-alanine biosynthesis; D-alanine from L-alanine: step 1/1. In terms of biological role, catalyzes the interconversion of L-alanine and D-alanine. May also act on other amino acids. This chain is Alanine racemase (alr), found in Pseudomonas syringae pv. syringae (strain B728a).